A 323-amino-acid polypeptide reads, in one-letter code: tRNA uridine(34) hydroxylase (323 aa).

In terms of domain architecture, Rhodanese spans 123–217 (SDPDVVVIDT…YLETIPEEES (95 aa)). The active-site Cysteine persulfide intermediate is the cysteine 177.

Belongs to the TrhO family.

It catalyses the reaction uridine(34) in tRNA + AH2 + O2 = 5-hydroxyuridine(34) in tRNA + A + H2O. Functionally, catalyzes oxygen-dependent 5-hydroxyuridine (ho5U) modification at position 34 in tRNAs. In Methylobacillus flagellatus (strain ATCC 51484 / DSM 6875 / VKM B-1610 / KT), this protein is tRNA uridine(34) hydroxylase.